A 347-amino-acid chain; its full sequence is Protein-glutamate methylesterase/protein-glutamine glutaminase 3 (347 aa).

Residues 3-120 enclose the Response regulatory domain; sequence QVFIVDDSAV…KNFLEESEIL (118 aa). The residue at position 54 (aspartate 54) is a 4-aspartylphosphate. The region spanning 159-347 is the CheB-type methylesterase domain; it reads IDTTDKLIAI…SKIVGEVQYF (189 aa). Residues serine 171, histidine 197, and aspartate 293 contribute to the active site.

The protein belongs to the CheB family. In terms of processing, phosphorylated by CheA. Phosphorylation of the N-terminal regulatory domain activates the methylesterase activity.

The protein localises to the cytoplasm. It catalyses the reaction [protein]-L-glutamate 5-O-methyl ester + H2O = L-glutamyl-[protein] + methanol + H(+). The enzyme catalyses L-glutaminyl-[protein] + H2O = L-glutamyl-[protein] + NH4(+). In terms of biological role, involved in chemotaxis. Part of a chemotaxis signal transduction system that modulates chemotaxis in response to various stimuli. Catalyzes the demethylation of specific methylglutamate residues introduced into the chemoreceptors (methyl-accepting chemotaxis proteins or MCP) by CheR. Also mediates the irreversible deamidation of specific glutamine residues to glutamic acid. This Leptospira interrogans serogroup Icterohaemorrhagiae serovar copenhageni (strain Fiocruz L1-130) protein is Protein-glutamate methylesterase/protein-glutamine glutaminase 3.